Consider the following 298-residue polypeptide: Probable endonuclease 4 (298 aa).

His69, His111, Glu146, Asp180, His183, His215, Asp228, His230, and Glu260 together coordinate Zn(2+).

Belongs to the AP endonuclease 2 family. It depends on Zn(2+) as a cofactor.

The catalysed reaction is Endonucleolytic cleavage to 5'-phosphooligonucleotide end-products.. Functionally, endonuclease IV plays a role in DNA repair. It cleaves phosphodiester bonds at apurinic or apyrimidinic (AP) sites, generating a 3'-hydroxyl group and a 5'-terminal sugar phosphate. In Bacillus cereus (strain AH187), this protein is Probable endonuclease 4.